A 413-amino-acid polypeptide reads, in one-letter code: DnaJ protein homolog xdj1 (413 aa).

The 68-residue stretch at 6–73 (KLYDILEVHF…ESREMYDMYG (68 aa)) folds into the J domain. The CR-type zinc finger occupies 134 to 219 (GKEVKLRATR…CKGSGTVPEQ (86 aa)). CXXCXGXG motif repeat units follow at residues 147–154 (CPRCQGRG), 164–171 (CLSCDGKG), 191–198 (CDTCNGKG), and 207–214 (CKHCKGSG). Residue C410 is modified to Cysteine methyl ester. C410 carries the S-farnesyl cysteine lipid modification. Positions 411–413 (QAQ) are cleaved as a propeptide — removed in mature form.

The protein localises to the endoplasmic reticulum membrane. In Schizosaccharomyces pombe (strain 972 / ATCC 24843) (Fission yeast), this protein is DnaJ protein homolog xdj1 (xdj1).